Reading from the N-terminus, the 575-residue chain is Sulfite reductase [NADPH] hemoprotein beta-component (575 aa).

[4Fe-4S] cluster is bound by residues C440, C446, C485, and C489. Residue C489 coordinates siroheme.

This sequence belongs to the nitrite and sulfite reductase 4Fe-4S domain family. As to quaternary structure, alpha(8)-beta(8). The alpha component is a flavoprotein, the beta component is a hemoprotein. It depends on siroheme as a cofactor. The cofactor is [4Fe-4S] cluster.

It catalyses the reaction hydrogen sulfide + 3 NADP(+) + 3 H2O = sulfite + 3 NADPH + 4 H(+). It functions in the pathway sulfur metabolism; hydrogen sulfide biosynthesis; hydrogen sulfide from sulfite (NADPH route): step 1/1. Functionally, component of the sulfite reductase complex that catalyzes the 6-electron reduction of sulfite to sulfide. This is one of several activities required for the biosynthesis of L-cysteine from sulfate. In Chromohalobacter salexigens (strain ATCC BAA-138 / DSM 3043 / CIP 106854 / NCIMB 13768 / 1H11), this protein is Sulfite reductase [NADPH] hemoprotein beta-component.